The following is a 298-amino-acid chain: Peroxisomal 2,4-dienoyl-CoA reductase [(3E)-enoyl-CoA-producing] (298 aa).

19-24 (GGGSGI) is a binding site for NADP(+). Substrate is bound at residue R44. D69 lines the NADP(+) pocket. Residues R71, F101, and 109-111 (SPN) each bind substrate. Residues K173 and 200 to 206 (PGPIGGT) each bind NADP(+). Residues 279–298 (SRAVEKRSRAKPVGLPTSKL) form a disordered region. A Microbody targeting signal motif is present at residues 296 to 298 (SKL).

Belongs to the short-chain dehydrogenases/reductases (SDR) family. 2,4-dienoyl-CoA reductase subfamily.

The protein resides in the peroxisome. The enzyme catalyses a (2E,4Z)-dienoyl-CoA + NADPH + H(+) = a 4,5-saturated-(3E)-enoyl-CoA + NADP(+). It catalyses the reaction a (2E,4E)-dienoyl-CoA + NADPH + H(+) = a 4,5-saturated-(3E)-enoyl-CoA + NADP(+). Auxiliary enzyme of beta-oxidation. Participates in the degradation of unsaturated fatty enoyl-CoA esters having double bonds in both even- and odd-numbered positions in peroxisome. Catalyzes the NADP-dependent reduction of 2,4-dienoyl-CoA to yield trans-3-enoyl-CoA. This chain is Peroxisomal 2,4-dienoyl-CoA reductase [(3E)-enoyl-CoA-producing], found in Arabidopsis thaliana (Mouse-ear cress).